A 275-amino-acid polypeptide reads, in one-letter code: 2,3,4,5-tetrahydropyridine-2,6-dicarboxylate N-succinyltransferase (275 aa).

Belongs to the transferase hexapeptide repeat family.

It localises to the cytoplasm. The enzyme catalyses (S)-2,3,4,5-tetrahydrodipicolinate + succinyl-CoA + H2O = (S)-2-succinylamino-6-oxoheptanedioate + CoA. It participates in amino-acid biosynthesis; L-lysine biosynthesis via DAP pathway; LL-2,6-diaminopimelate from (S)-tetrahydrodipicolinate (succinylase route): step 1/3. In Paraburkholderia phymatum (strain DSM 17167 / CIP 108236 / LMG 21445 / STM815) (Burkholderia phymatum), this protein is 2,3,4,5-tetrahydropyridine-2,6-dicarboxylate N-succinyltransferase.